Reading from the N-terminus, the 66-residue chain is uncharacterized protein (66 aa).

This is an uncharacterized protein from Archaeoglobus fulgidus (strain ATCC 49558 / DSM 4304 / JCM 9628 / NBRC 100126 / VC-16).